Consider the following 421-residue polypeptide: Medium-chain specific acyl-CoA dehydrogenase, mitochondrial (421 aa).

Residues M1 to T25 constitute a mitochondrion transit peptide. K69 carries the N6-acetyllysine; alternate modification. K69 carries the N6-succinyllysine; alternate modification. An FAD-binding site is contributed by Y158–S167. S167 provides a ligand contact to octanoyl-CoA. K179 is subject to N6-succinyllysine. W191–T193 provides a ligand contact to FAD. K212, K217, K259, and K271 each carry N6-acetyllysine; alternate. 4 positions are modified to N6-succinyllysine; alternate: K212, K217, K259, and K271. D278 is a binding site for octanoyl-CoA. K279 bears the N6-acetyllysine mark. R281 is a binding site for octanoyl-CoA. K301 carries the post-translational modification N6-acetyllysine. Residues R306–T308 and H316–Q317 contribute to the FAD site. T351 bears the Phosphothreonine mark. Residues Q374–G378 and E401–Q405 contribute to the FAD site. E401 lines the octanoyl-CoA pocket. E401 acts as the Proton acceptor in catalysis.

The protein belongs to the acyl-CoA dehydrogenase family. In terms of assembly, homotetramer. Interacts with the heterodimeric electron transfer flavoprotein ETF. The cofactor is FAD. Acetylated. Could occur at proximity of the cofactor-binding sites and reduce the catalytic activity. Could be deacetylated by SIRT3.

Its subcellular location is the mitochondrion matrix. It catalyses the reaction a medium-chain 2,3-saturated fatty acyl-CoA + oxidized [electron-transfer flavoprotein] + H(+) = a medium-chain (2E)-enoyl-CoA + reduced [electron-transfer flavoprotein]. It carries out the reaction pentanoyl-CoA + oxidized [electron-transfer flavoprotein] + H(+) = (2E)-pentenoyl-CoA + reduced [electron-transfer flavoprotein]. The enzyme catalyses hexanoyl-CoA + oxidized [electron-transfer flavoprotein] + H(+) = (2E)-hexenoyl-CoA + reduced [electron-transfer flavoprotein]. The catalysed reaction is octanoyl-CoA + oxidized [electron-transfer flavoprotein] + H(+) = (2E)-octenoyl-CoA + reduced [electron-transfer flavoprotein]. It catalyses the reaction decanoyl-CoA + oxidized [electron-transfer flavoprotein] + H(+) = (2E)-decenoyl-CoA + reduced [electron-transfer flavoprotein]. It carries out the reaction dodecanoyl-CoA + oxidized [electron-transfer flavoprotein] + H(+) = (2E)-dodecenoyl-CoA + reduced [electron-transfer flavoprotein]. The enzyme catalyses tetradecanoyl-CoA + oxidized [electron-transfer flavoprotein] + H(+) = (2E)-tetradecenoyl-CoA + reduced [electron-transfer flavoprotein]. The catalysed reaction is oxidized [electron-transfer flavoprotein] + hexadecanoyl-CoA + H(+) = (2E)-hexadecenoyl-CoA + reduced [electron-transfer flavoprotein]. The protein operates within lipid metabolism; mitochondrial fatty acid beta-oxidation. Functionally, medium-chain specific acyl-CoA dehydrogenase is one of the acyl-CoA dehydrogenases that catalyze the first step of mitochondrial fatty acid beta-oxidation, an aerobic process breaking down fatty acids into acetyl-CoA and allowing the production of energy from fats. The first step of fatty acid beta-oxidation consists in the removal of one hydrogen from C-2 and C-3 of the straight-chain fatty acyl-CoA thioester, resulting in the formation of trans-2-enoyl-CoA. Electron transfer flavoprotein (ETF) is the electron acceptor that transfers electrons to the main mitochondrial respiratory chain via ETF-ubiquinone oxidoreductase (ETF dehydrogenase). Among the different mitochondrial acyl-CoA dehydrogenases, medium-chain specific acyl-CoA dehydrogenase acts specifically on acyl-CoAs with saturated 6 to 12 carbons long primary chains. The sequence is that of Medium-chain specific acyl-CoA dehydrogenase, mitochondrial from Homo sapiens (Human).